The chain runs to 89 residues: uncharacterized protein (89 aa).

This sequence to Synechocystis PCC 6803 slr1025.

This is an uncharacterized protein from Ureaplasma parvum serovar 3 (strain ATCC 700970).